The sequence spans 427 residues: Phosphoribosylamine--glycine ligase (427 aa).

One can recognise an ATP-grasp domain in the interval 110-315; sequence KDFCQRHGLP…IVPILLAAAK (206 aa). 136-196 contributes to the ATP binding site; sequence LDTLEAPFVI…EEFMHGEEAS (61 aa). Glu285 and Asn287 together coordinate Mg(2+).

Belongs to the GARS family. It depends on Mg(2+) as a cofactor. The cofactor is Mn(2+).

The enzyme catalyses 5-phospho-beta-D-ribosylamine + glycine + ATP = N(1)-(5-phospho-beta-D-ribosyl)glycinamide + ADP + phosphate + H(+). Its pathway is purine metabolism; IMP biosynthesis via de novo pathway; N(1)-(5-phospho-D-ribosyl)glycinamide from 5-phospho-alpha-D-ribose 1-diphosphate: step 2/2. This chain is Phosphoribosylamine--glycine ligase, found in Caulobacter vibrioides (strain ATCC 19089 / CIP 103742 / CB 15) (Caulobacter crescentus).